A 318-amino-acid polypeptide reads, in one-letter code: Methionyl-tRNA formyltransferase (318 aa).

Residue S112–P115 participates in (6S)-5,6,7,8-tetrahydrofolate binding.

It belongs to the Fmt family.

The enzyme catalyses L-methionyl-tRNA(fMet) + (6R)-10-formyltetrahydrofolate = N-formyl-L-methionyl-tRNA(fMet) + (6S)-5,6,7,8-tetrahydrofolate + H(+). Attaches a formyl group to the free amino group of methionyl-tRNA(fMet). The formyl group appears to play a dual role in the initiator identity of N-formylmethionyl-tRNA by promoting its recognition by IF2 and preventing the misappropriation of this tRNA by the elongation apparatus. The chain is Methionyl-tRNA formyltransferase from Haemophilus influenzae (strain PittGG).